The sequence spans 350 residues: Serpentine receptor class beta-12 (350 aa).

The Extracellular portion of the chain corresponds to 1–21; it reads MSEANLTECELAYQLTYHPFY. N-linked (GlcNAc...) asparagine glycosylation is present at N5. The helical transmembrane segment at 22–42 threads the bilayer; the sequence is MIAQFWSFFVSLLAMPSLIFF. Topologically, residues 43 to 57 are cytoplasmic; the sequence is MVEKVFKLPFHGNLK. A helical membrane pass occupies residues 58–78; that stretch reads FLLVSYFIGTFLFASIICFTF. Residues 79–103 are Extracellular-facing; it reads GYHFFVPFFVTSNCDLIINATLFKY. An N-linked (GlcNAc...) asparagine glycan is attached at N97. The chain crosses the membrane as a helical span at residues 104-124; that stretch reads GHMIALIFMTIPMILPTAFTV. Residues 125–141 lie on the Cytoplasmic side of the membrane; sequence ERFVALKMAHSYEHVRT. Residues 142–162 traverse the membrane as a helical segment; sequence LLGPVLVLVVIAIDSMFLYDI. The Extracellular portion of the chain corresponds to 163-189; that stretch reads YGQEKFDKPFINFILVPATSALQFNSF. The helical transmembrane segment at 190–210 threads the bilayer; the sequence is LWYMLYLKITNFICNLILLFI. Residues 211-243 are Cytoplasmic-facing; it reads HKILHQSSRYRRKNVSLSVKYEMQEISQSSRFT. Residues 244-264 form a helical membrane-spanning segment; that stretch reads LIVTFTHLLFFGWYVSTILLI. Residues 265–282 are Extracellular-facing; the sequence is RTVGPDFFRGFINYTVMR. The N-linked (GlcNAc...) asparagine glycan is linked to N277. Residues 283–303 traverse the membrane as a helical segment; that stretch reads GVYCATPTYNLVIVFIGFKAL. Residues 304–350 are Cytoplasmic-facing; sequence NHLNFKRNNKVQSTIQIKSTGQEGAENYDNAISNYWDSVYTMNKSKL.

This sequence belongs to the nematode receptor-like protein srb family. Expressed throughout the head.

It localises to the cell membrane. The protein localises to the perikaryon. It is found in the cell projection. The protein resides in the dendrite. Functionally, G-protein coupled receptor. Plays a role in the navigational capacity of sperm and promotes the targeting of sperm derived from males to the fertilization site in the uterus of hermaphrodites. The chain is Serpentine receptor class beta-12 from Caenorhabditis elegans.